Here is a 258-residue protein sequence, read N- to C-terminus: Transcription initiation factor TFIID subunit 9B (258 aa).

Met1 bears the N-acetylmethionine mark. Phosphoserine is present on Ser147. 2 positions are modified to phosphothreonine: Thr159 and Thr174. Ser177 is modified (phosphoserine). Over residues Ser227 to Asn236 the composition is skewed to polar residues. Residues Ser227–Met258 form a disordered region. Acidic residues predominate over residues Asp244 to Met258.

Belongs to the TAF9 family. As to quaternary structure, binds TAF5 and TAF6. Component of TFIID and the TATA-binding protein-free TAF complex (TFTC). TFIID is composed of TATA binding protein (TBP) and a number of TBP-associated factors (TAFs). Binds N-terminal domain of p53/TP53 which is essential for transcription.

It localises to the nucleus. Its function is as follows. Essential for cell viability. TAF9 and TAF9L are involved in transcriptional activation as well as repression of distinct but overlapping sets of genes. May have a role in gene regulation associated with apoptosis. TAFs are components of the transcription factor IID (TFIID) complex, the TBP-free TAFII complex (TFTC), the PCAF histone acetylase complex and the STAGA transcription coactivator-HAT complex. TFIID or TFTC are essential for the regulation of RNA polymerase II-mediated transcription. This is Transcription initiation factor TFIID subunit 9B (Taf9b) from Rattus norvegicus (Rat).